We begin with the raw amino-acid sequence, 134 residues long: Small ribosomal subunit protein uS9 (134 aa).

This sequence belongs to the universal ribosomal protein uS9 family.

This Pseudothermotoga lettingae (strain ATCC BAA-301 / DSM 14385 / NBRC 107922 / TMO) (Thermotoga lettingae) protein is Small ribosomal subunit protein uS9.